A 131-amino-acid polypeptide reads, in one-letter code: Neurophysin 2 (131 aa).

7 cysteine pairs are disulfide-bonded: C10/C55, C13/C27, C21/C45, C28/C35, C62/C74, C68/C86, and C75/C80.

The protein belongs to the vasopressin/oxytocin family.

The protein localises to the secreted. Neurophysin 2 specifically binds vasopressin. The polypeptide is Neurophysin 2 (Anser anser anser (Western greylag goose)).